We begin with the raw amino-acid sequence, 280 residues long: UDP-2,3-diacylglucosamine pyrophosphatase LpxI (280 aa).

Substrate is bound by residues Ala12, 74–75 (NV), Gln169, 187–188 (TD), Lys214, and 226–233 (LPTIGVAT).

Belongs to the LpxI family. As to quaternary structure, homodimer. Mg(2+) is required as a cofactor.

The protein resides in the cell inner membrane. It catalyses the reaction UDP-2-N,3-O-bis[(3R)-3-hydroxytetradecanoyl]-alpha-D-glucosamine + H2O = 2-N,3-O-bis[(3R)-3-hydroxytetradecanoyl]-alpha-D-glucosaminyl 1-phosphate + UMP + 2 H(+). The protein operates within glycolipid biosynthesis; lipid IV(A) biosynthesis; lipid IV(A) from (3R)-3-hydroxytetradecanoyl-[acyl-carrier-protein] and UDP-N-acetyl-alpha-D-glucosamine: step 4/6. With respect to regulation, inhibited by high concentrations of Cu(2+) and Zn(2+). Completely inhibited by EDTA in vitro. Its function is as follows. Hydrolyzes the pyrophosphate bond of UDP-2,3-diacylglucosamine to form 2,3-diacylglucosamine 1-phosphate (lipid X) and UMP by catalyzing the attack of water at the beta-P atom. Involved in the biosynthesis of lipid A, a phosphorylated glycolipid that anchors the lipopolysaccharide to the outer membrane of the cell. Can functionally complement lpxH deficiency in E.coli. Cannot use CDP-diacylglycerol as substrate. The polypeptide is UDP-2,3-diacylglucosamine pyrophosphatase LpxI (Caulobacter vibrioides (strain ATCC 19089 / CIP 103742 / CB 15) (Caulobacter crescentus)).